Here is a 490-residue protein sequence, read N- to C-terminus: Homoserine O-acetyltransferase (490 aa).

The region spanning 48–354 (NVILVCHALT…NSEYGHDAFL (307 aa)) is the AB hydrolase-1 domain. The active-site Nucleophile is Ser-153. Position 223 (Arg-223) interacts with substrate. Catalysis depends on residues Asp-317 and His-350. A substrate-binding site is contributed by Asp-351. CBS domains are found at residues 377 to 434 (MSHT…ANSI) and 438 to 490 (MTKN…LYEK).

It belongs to the AB hydrolase superfamily. MetX family. Homodimer.

It is found in the cytoplasm. It carries out the reaction L-homoserine + acetyl-CoA = O-acetyl-L-homoserine + CoA. It functions in the pathway amino-acid biosynthesis; L-methionine biosynthesis via de novo pathway; O-acetyl-L-homoserine from L-homoserine: step 1/1. In terms of biological role, transfers an acetyl group from acetyl-CoA to L-homoserine, forming acetyl-L-homoserine. This chain is Homoserine O-acetyltransferase, found in Methanosphaera stadtmanae (strain ATCC 43021 / DSM 3091 / JCM 11832 / MCB-3).